A 458-amino-acid polypeptide reads, in one-letter code: Vitamin K-dependent protein C (458 aa).

An N-terminal signal peptide occupies residues Ile1 to Gly27. Positions Pro28 to Arg36 are excised as a propeptide. The region spanning Ala37–Asp82 is the Gla domain. 4-carboxyglutamate occurs at positions 42, 43, 50, 52, 55, 56, 61, 62, and 65. A disulfide bridge links Cys53 with Cys58. 4 cysteine pairs are disulfide-bonded: Cys86–Cys105, Cys95–Cys100, Cys99–Cys114, and Cys116–Cys125. 2 consecutive EGF-like domains span residues Ser91–Gln126 and Arg130–Glu170. Asp107 bears the (3R)-3-hydroxyaspartate mark. The N-linked (GlcNAc...) asparagine glycan is linked to Asn133. Disulfide bonds link Cys134–Cys145, Cys141–Cys154, Cys156–Cys169, Cys177–Cys316, and Cys235–Cys251. The region spanning Ile210–Glu447 is the Peptidase S1 domain. The active-site Charge relay system is His250. The N-linked (GlcNAc...) asparagine glycan is linked to Asn287. Catalysis depends on Asp296, which acts as the Charge relay system. An N-linked (GlcNAc...) asparagine glycan is attached at Asn352. 2 disulfides stabilise this stretch: Cys370–Cys384 and Cys395–Cys423. Ser399 functions as the Charge relay system in the catalytic mechanism.

Belongs to the peptidase S1 family. As to quaternary structure, synthesized as a single chain precursor, which is cleaved into a light chain and a heavy chain held together by a disulfide bond. The enzyme is then activated by thrombin, which cleaves a tetradecapeptide from the amino end of the heavy chain; this reaction, which occurs at the surface of endothelial cells, is strongly promoted by thrombomodulin. The vitamin K-dependent, enzymatic carboxylation of some Glu residues allows the modified protein to bind calcium. In terms of processing, the iron and 2-oxoglutarate dependent 3-hydroxylation of aspartate and asparagine is (R) stereospecific within EGF domains. In terms of tissue distribution, plasma; synthesized in the liver.

The protein localises to the secreted. The protein resides in the golgi apparatus. It localises to the endoplasmic reticulum. It carries out the reaction Degradation of blood coagulation factors Va and VIIIa.. Its function is as follows. Protein C is a vitamin K-dependent serine protease that regulates blood coagulation by inactivating factors Va and VIIIa in the presence of calcium ions and phospholipids. Exerts a protective effect on the endothelial cell barrier function. This is Vitamin K-dependent protein C (PROC) from Oryctolagus cuniculus (Rabbit).